The chain runs to 367 residues: Glutamate 5-kinase (367 aa).

Lysine 10 serves as a coordination point for ATP. Residues serine 50, aspartate 137, and asparagine 149 each contribute to the substrate site. ATP is bound by residues 169 to 170 (TD) and 211 to 217 (TGGMGTK). A PUA domain is found at 275–353 (AGEITVDEGA…QQIDAILGYE (79 aa)).

This sequence belongs to the glutamate 5-kinase family.

It localises to the cytoplasm. It carries out the reaction L-glutamate + ATP = L-glutamyl 5-phosphate + ADP. The protein operates within amino-acid biosynthesis; L-proline biosynthesis; L-glutamate 5-semialdehyde from L-glutamate: step 1/2. Its function is as follows. Catalyzes the transfer of a phosphate group to glutamate to form L-glutamate 5-phosphate. This is Glutamate 5-kinase from Cronobacter sakazakii (strain ATCC BAA-894) (Enterobacter sakazakii).